The primary structure comprises 141 residues: Nucleoside diphosphate kinase (141 aa).

Lys11, Phe59, Arg87, Thr93, Arg104, and Asn114 together coordinate ATP. The active-site Pros-phosphohistidine intermediate is His117.

Belongs to the NDK family. As to quaternary structure, homotetramer. Requires Mg(2+) as cofactor.

The protein localises to the cytoplasm. The catalysed reaction is a 2'-deoxyribonucleoside 5'-diphosphate + ATP = a 2'-deoxyribonucleoside 5'-triphosphate + ADP. It carries out the reaction a ribonucleoside 5'-diphosphate + ATP = a ribonucleoside 5'-triphosphate + ADP. Its function is as follows. Major role in the synthesis of nucleoside triphosphates other than ATP. The ATP gamma phosphate is transferred to the NDP beta phosphate via a ping-pong mechanism, using a phosphorylated active-site intermediate. This is Nucleoside diphosphate kinase from Cupriavidus taiwanensis (strain DSM 17343 / BCRC 17206 / CCUG 44338 / CIP 107171 / LMG 19424 / R1) (Ralstonia taiwanensis (strain LMG 19424)).